The chain runs to 209 residues: Imidazole glycerol phosphate synthase subunit HisH (209 aa).

Positions 1–205 constitute a Glutamine amidotransferase type-1 domain; it reads MIAIIDYGMG…QGVVEAWKSS (205 aa). Cys79 acts as the Nucleophile in catalysis. Residues His180 and Glu182 contribute to the active site.

In terms of assembly, heterodimer of HisH and HisF.

Its subcellular location is the cytoplasm. The catalysed reaction is 5-[(5-phospho-1-deoxy-D-ribulos-1-ylimino)methylamino]-1-(5-phospho-beta-D-ribosyl)imidazole-4-carboxamide + L-glutamine = D-erythro-1-(imidazol-4-yl)glycerol 3-phosphate + 5-amino-1-(5-phospho-beta-D-ribosyl)imidazole-4-carboxamide + L-glutamate + H(+). The enzyme catalyses L-glutamine + H2O = L-glutamate + NH4(+). It participates in amino-acid biosynthesis; L-histidine biosynthesis; L-histidine from 5-phospho-alpha-D-ribose 1-diphosphate: step 5/9. In terms of biological role, IGPS catalyzes the conversion of PRFAR and glutamine to IGP, AICAR and glutamate. The HisH subunit catalyzes the hydrolysis of glutamine to glutamate and ammonia as part of the synthesis of IGP and AICAR. The resulting ammonia molecule is channeled to the active site of HisF. In Bacillus cereus (strain ATCC 14579 / DSM 31 / CCUG 7414 / JCM 2152 / NBRC 15305 / NCIMB 9373 / NCTC 2599 / NRRL B-3711), this protein is Imidazole glycerol phosphate synthase subunit HisH.